A 1053-amino-acid polypeptide reads, in one-letter code: Phosphoenolpyruvate carboxylase (1053 aa).

His-246 is a catalytic residue. Basic and acidic residues predominate over residues Arg-461–Pro-473. Residues Arg-461–Tyr-480 are disordered. The active site involves Lys-699.

This sequence belongs to the PEPCase type 1 family. Mg(2+) is required as a cofactor.

It catalyses the reaction oxaloacetate + phosphate = phosphoenolpyruvate + hydrogencarbonate. In terms of biological role, forms oxaloacetate, a four-carbon dicarboxylic acid source for the tricarboxylic acid cycle. This chain is Phosphoenolpyruvate carboxylase (ppc), found in Synechococcus sp. (strain ATCC 27144 / PCC 6301 / SAUG 1402/1) (Anacystis nidulans).